The sequence spans 528 residues: UDP-glucuronosyltransferase 1A9 (528 aa).

An N-terminal signal peptide occupies residues 1 to 23 (MAPVAFPTSFFLCLLLASGLAQA). A glycan (N-linked (GlcNAc...) asparagine) is linked at asparagine 69. Position 97 is an N6-succinyllysine (lysine 97). Asparagine 290 and asparagine 428 each carry an N-linked (GlcNAc...) asparagine glycan. Residues 486-506 (VIGFLLAIVLTVVFIVFKCCA) form a helical membrane-spanning segment.

This sequence belongs to the UDP-glycosyltransferase family. As to quaternary structure, homodimer. Homooligomer. Interacts with UGT1A1, UGT1A3, UGT1A4, UGT1A6, UGT1A7, UGT1A8 and UGT1A10 to form heterodimers. Highly expressed in liver and at lower levels in stomach and kidney.

It localises to the endoplasmic reticulum membrane. The enzyme catalyses glucuronate acceptor + UDP-alpha-D-glucuronate = acceptor beta-D-glucuronoside + UDP + H(+). The catalysed reaction is 2-hydroxy-17beta-estradiol + UDP-alpha-D-glucuronate = 2-hydroxy-17beta-estradiol 3-O-(beta-D-glucuronate) + UDP + H(+). It carries out the reaction 4-hydroxy-17beta-estradiol + UDP-alpha-D-glucuronate = 17beta-estradiol 4-O-(beta-D-glucuronate) + UDP + H(+). It catalyses the reaction 2-hydroxyestrone + UDP-alpha-D-glucuronate = 2-hydroxyestrone 3-O-(beta-D-glucuronate) + UDP + H(+). The enzyme catalyses 4-hydroxyestrone + UDP-alpha-D-glucuronate = estrone 4-O-(beta-D-glucuronate) + UDP + H(+). The catalysed reaction is prunetin + UDP-alpha-D-glucuronate = prunetin-5-O-beta-D-glucuronide + UDP. It carries out the reaction 8-iso-prostaglandin F2alpha + UDP-alpha-D-glucuronate = 8-iso-prostaglandin F2alpha-glucuronide + UDP + H(+). It catalyses the reaction 5-epi-5-F2t-IsoP + UDP-alpha-D-glucuronate = 5-epi-5-F2t-IsoP-glucuronide + UDP + H(+). The enzyme catalyses (5Z,8Z,11Z,14Z)-eicosatetraenoate + UDP-alpha-D-glucuronate = O-[(5Z),(8Z),(11Z),(14Z)-eicosatetraenoyl]-beta-D-glucuronate + UDP. The catalysed reaction is 15-hydroxy-(5Z,8Z,11Z,13E)-eicosatetraenoate + UDP-alpha-D-glucuronate = 15-O-(beta-D-glucuronosyl)-(5Z,8Z,11Z,14Z)-eicosatetraenoate + UDP + H(+). It carries out the reaction prostaglandin B1 + UDP-alpha-D-glucuronate = 15-O-(beta-D-glucuronosyl)-prostaglandin B1 + UDP + H(+). It catalyses the reaction (E)-ferulate + UDP-alpha-D-glucuronate = (E)-4-O-(beta-D-glucuronosyl)-ferulate + UDP + H(+). The enzyme catalyses (E)-ferulate + UDP-alpha-D-glucuronate = (E)-ferulic acid beta-D-glucuronate ester + UDP. The catalysed reaction is candesartan + UDP-alpha-D-glucuronate = candesartan O-beta-D-glucuronoside + UDP. It carries out the reaction SN-38 + UDP-alpha-D-glucuronate = SN-38 O-beta-D-glucuronide + UDP + H(+). It catalyses the reaction mycophenolate + UDP-alpha-D-glucuronate = mycophenolate 7-O-beta-D-glucuronide + UDP + H(+). Its function is as follows. UDP-glucuronosyltransferase (UGT) that catalyzes phase II biotransformation reactions in which lipophilic substrates are conjugated with glucuronic acid to increase the metabolite's water solubility, thereby facilitating excretion into either the urine or bile. Essential for the elimination and detoxification of drugs, xenobiotics and endogenous compounds. Catalyzes the glucuronidation of endogenous estrogen hormones such as estradiol and estrone. Involved in the glucuronidation of arachidonic acid (AA) and AA-derived eicosanoids including 15-HETE, PGB1 and F2-isoprostanes (8-iso-PGF2alpha and 5-epi-5-F2t-IsoP). Glucuronates the phytochemical ferulic acid efficently at both the phenolic or the carboxylic acid group. Also catalyzes the glucuronidation of the isoflavones genistein, daidzein, glycitein, formononetin, biochanin A and prunetin, which are phytoestrogens with anticancer and cardiovascular properties. Involved in the glucuronidation of the AGTR1 angiotensin receptor antagonist caderastan, a drug which can inhibit the effect of angiotensin II. Involved in the biotransformation of 7-ethyl-10-hydroxycamptothecin (SN-38), the pharmacologically active metabolite of the anticancer drug irinotecan. Also metabolizes mycophenolate, an immunosuppressive agent. The polypeptide is UDP-glucuronosyltransferase 1A9 (Mus musculus (Mouse)).